A 281-amino-acid polypeptide reads, in one-letter code: ATP phosphoribosyltransferase (281 aa).

It belongs to the ATP phosphoribosyltransferase family. Long subfamily. The cofactor is Mg(2+).

It localises to the cytoplasm. The enzyme catalyses 1-(5-phospho-beta-D-ribosyl)-ATP + diphosphate = 5-phospho-alpha-D-ribose 1-diphosphate + ATP. The protein operates within amino-acid biosynthesis; L-histidine biosynthesis; L-histidine from 5-phospho-alpha-D-ribose 1-diphosphate: step 1/9. Its activity is regulated as follows. Feedback inhibited by histidine. Functionally, catalyzes the condensation of ATP and 5-phosphoribose 1-diphosphate to form N'-(5'-phosphoribosyl)-ATP (PR-ATP). Has a crucial role in the pathway because the rate of histidine biosynthesis seems to be controlled primarily by regulation of HisG enzymatic activity. This chain is ATP phosphoribosyltransferase, found in Kocuria rhizophila (strain ATCC 9341 / DSM 348 / NBRC 103217 / DC2201).